The chain runs to 336 residues: Deoxyhypusine hydroxylase (336 aa).

HEAT-like PBS-type repeat units follow at residues 68-94 and 101-127; these read LKHE…VVQD and CRHE…LRDN. Fe cation contacts are provided by His-70, Glu-71, His-103, and Glu-104. The segment at 158–179 is disordered; the sequence is LKPSDFTSIDPAPPMPLTAKEP. 2 HEAT-like PBS-type repeats span residues 235–261 and 268–295; these read FRHE…TLSD and VRHE…FLND. Fe cation-binding residues include His-237, Glu-238, His-270, and Glu-271.

This sequence belongs to the deoxyhypusine hydroxylase family. Requires Fe(2+) as cofactor.

It is found in the cytoplasm. The protein localises to the nucleus. It carries out the reaction [eIF5A protein]-deoxyhypusine + AH2 + O2 = [eIF5A protein]-hypusine + A + H2O. It participates in protein modification; eIF5A hypusination. Catalyzes the hydroxylation of the N(6)-(4-aminobutyl)-L-lysine intermediate to form hypusine, an essential post-translational modification only found in mature eIF-5A factor. The sequence is that of Deoxyhypusine hydroxylase (lia1) from Emericella nidulans (strain FGSC A4 / ATCC 38163 / CBS 112.46 / NRRL 194 / M139) (Aspergillus nidulans).